A 1039-amino-acid polypeptide reads, in one-letter code: Potassium-transporting ATPase alpha chain 2 (1039 aa).

The Cytoplasmic portion of the chain corresponds to 1–102 (MHQKTPEIYS…NSLTPPKQTP (102 aa)). A helical transmembrane segment spans residues 103–123 (EIVKFLKQMVGGFSILLWVGA). Over 124–146 (FLCWIAYGIQYSSDKSASLNNVY) the chain is Lumenal. Residues 147-167 (LGCVLGLVVILTGIFAYYQEA) traverse the membrane as a helical segment. Topologically, residues 168–303 (KSTNIMSSFN…NEKTPIAIEI (136 aa)) are cytoplasmic. A helical membrane pass occupies residues 304-323 (EHFVHIVAGVAVSIGILFFI). The Lumenal segment spans residues 324 to 335 (IAVSLKYQVLDS). The helical transmembrane segment at 336–353 (IIFLIGIIVANVPEGLLA) threads the bilayer. Topologically, residues 354 to 787 (TVTVTLSLTA…EEGRLIFDNL (434 aa)) are cytoplasmic. Catalysis depends on Asp-391, which acts as the 4-aspartylphosphate intermediate. Mg(2+) is bound by residues Asp-732 and Asp-736. Residues 788-807 (KKTIAYSLTKNIAELCPFLI) traverse the membrane as a helical segment. Topologically, residues 808-817 (YIIVGLPLPI) are lumenal. The chain crosses the membrane as a helical span at residues 818–838 (GTITILFIDLGTDIIPSIALA). The Cytoplasmic segment spans residues 839-858 (YEKAESDIMNRKPRHKNKDR). A helical transmembrane segment spans residues 859 to 881 (LVNQPLAVYSYLHIGLMQALGAF). Topologically, residues 882-933 (LVYFTVYAQEGFLPRTLINLRVEWEKDYVNDLKDSYGQEWTRYQREYLEWTG) are lumenal. Residues 934–953 (YTAFFVGILVQQIADLIIRK) form a helical membrane-spanning segment. Over 954 to 967 (TRRNSIFQQGLFRN) the chain is Cytoplasmic. Ser-958 bears the Phosphoserine; by PKA mark. Residues 968 to 986 (KVIWVGITSQIIIGLILSY) traverse the membrane as a helical segment. The Lumenal portion of the chain corresponds to 987–1001 (GLGSVTALSFTMLRA). Residues 1002 to 1022 (QYWFVAVPHAILIWVYDEVRK) traverse the membrane as a helical segment. Residues 1023 to 1039 (LFIRLYPGSWWDKNMYY) lie on the Cytoplasmic side of the membrane.

Belongs to the cation transport ATPase (P-type) (TC 3.A.3) family. Type IIC subfamily. In terms of assembly, the ATPase pump is composed of a catalytic alpha subunit and an auxiliary non-catalytic beta subunit. The alpha subunit pairs with the beta subunit of gastric H(+)/K(+) ATPase ATP4B or the beta subunit of Na(+)/K(+) ATPases ATP1B1 and ATP1B3; this interaction is required for the formation of a functionally active pump and its targeting at the plasma membrane. As to expression, expressed in airway epithelial cells (at protein level). Found in skin and kidney. Detected in prostate basal cells (at protein level). Expression is increased in benign prostate hyperplasia and tumor tissues (at protein level).

It is found in the apical cell membrane. The catalysed reaction is K(+)(out) + ATP + H2O + H(+)(in) = K(+)(in) + ADP + phosphate + 2 H(+)(out). It carries out the reaction K(+)(out) + Na(+)(in) + ATP + H2O = K(+)(in) + Na(+)(out) + ADP + phosphate + H(+). Its activity is regulated as follows. The ATPase activity is regulated by monovalent cations and pH. Up-regulated by K(+) ions in a dose-dependent way. Down-regulated by Na(+) ions. Inhibited by Na(+)/K(+)-ATPase inhibitor ouabain and H(+)/K(+)-ATPase inhibitor SCH-28080 with an intermediate sensitivity to completely resistant Na(+)/K(+)-ATPases and highly sensitive H(+)/K(+)-ATPases. The catalytic subunit of a H(+)/K(+) ATPase and/or Na(+)/K(+) ATPase pump which transports K(+) ions in exchange for Na(+) and/or H(+) ions across the apical membrane of epithelial cells. Uses ATP as an energy source to pump K(+) ions into the cell while transporting Na(+) and/or H(+) ions to the extracellular compartment. Involved in the maintenance of electrolyte homeostasis through K(+) ion absorption in kidney and colon. In the airway epithelium, may play a primary role in mucus acidification regulating its viscosity and clearance. The chain is Potassium-transporting ATPase alpha chain 2 from Homo sapiens (Human).